The following is a 132-amino-acid chain: Small ribosomal subunit protein uS8 (132 aa).

Belongs to the universal ribosomal protein uS8 family. As to quaternary structure, part of the 30S ribosomal subunit. Contacts proteins S5 and S12.

Functionally, one of the primary rRNA binding proteins, it binds directly to 16S rRNA central domain where it helps coordinate assembly of the platform of the 30S subunit. This chain is Small ribosomal subunit protein uS8, found in Xanthomonas campestris pv. campestris (strain 8004).